The sequence spans 584 residues: UvrABC system protein C (584 aa).

Positions 12–89 (NKPGCYLFLN…IKKYRPKYNV (78 aa)) constitute a GIY-YIG domain. The region spanning 194–229 (NQVKQTLVKQMQKASDNLQFEQAKRIKDQITSLDFI) is the UVR domain.

This sequence belongs to the UvrC family. In terms of assembly, interacts with UvrB in an incision complex.

The protein localises to the cytoplasm. In terms of biological role, the UvrABC repair system catalyzes the recognition and processing of DNA lesions. UvrC both incises the 5' and 3' sides of the lesion. The N-terminal half is responsible for the 3' incision and the C-terminal half is responsible for the 5' incision. This Mycoplasma capricolum subsp. capricolum (strain California kid / ATCC 27343 / NCTC 10154) protein is UvrABC system protein C.